Consider the following 149-residue polypeptide: Thioredoxin-like protein 4B (149 aa).

Belongs to the DIM1 family. As to quaternary structure, homodimer. Interacts with the U5-102 kDa protein subunit of the spliceosome.

Its subcellular location is the nucleus. Functionally, essential role in pre-mRNA splicing. Required in cell cycle progression for S/G(2) transition. In Homo sapiens (Human), this protein is Thioredoxin-like protein 4B (TXNL4B).